Reading from the N-terminus, the 68-residue chain is Lividin-1 (68 aa).

Positions 1-22 are cleaved as a signal peptide; sequence MFTLKKSLLLLFFLGTINLSLC. Residues 23–42 constitute a propeptide that is removed on maturation; it reads QEERNADEEERRDERNVEVE. Cysteines 62 and 68 form a disulfide.

In terms of tissue distribution, expressed by the skin glands.

It is found in the secreted. Its function is as follows. Antimicrobial peptide. The sequence is that of Lividin-1 from Odorrana livida (Green mountain frog).